The following is a 955-amino-acid chain: UvrABC system protein A (955 aa).

35–42 (GLSGSGKS) contacts ATP. ABC transporter domains follow at residues 322 to 601 (WGST…EESI) and 621 to 951 (GHDN…RYLK). 654 to 661 (GVSGSGKS) is a binding site for ATP. The segment at 754–780 (CEACQGDGLIKIEMHFLPDVYVKCDIC) adopts a C4-type zinc-finger fold.

This sequence belongs to the ABC transporter superfamily. UvrA family. Forms a heterotetramer with UvrB during the search for lesions.

The protein resides in the cytoplasm. Functionally, the UvrABC repair system catalyzes the recognition and processing of DNA lesions. UvrA is an ATPase and a DNA-binding protein. A damage recognition complex composed of 2 UvrA and 2 UvrB subunits scans DNA for abnormalities. When the presence of a lesion has been verified by UvrB, the UvrA molecules dissociate. The sequence is that of UvrABC system protein A from Rickettsia conorii (strain ATCC VR-613 / Malish 7).